The primary structure comprises 314 residues: Transcription factor DICHOTOMA (314 aa).

In terms of domain architecture, TCP spans Lys87–Leu145. In terms of domain architecture, R spans Lys201 to Lys218.

It is found in the nucleus. In terms of biological role, transcription regulator involved in the dorsovental asymmetry of flowers. Promotes dorsal identity. This is Transcription factor DICHOTOMA (DICH) from Antirrhinum majus (Garden snapdragon).